The primary structure comprises 384 residues: S-adenosylmethionine synthase (384 aa).

Histidine 15 serves as a coordination point for ATP. Aspartate 17 is a Mg(2+) binding site. Residue glutamate 43 participates in K(+) binding. L-methionine contacts are provided by glutamate 56 and glutamine 99. Residues 99–109 form a flexible loop region; it reads QSPDINQGVDR. Residues 164–166, 230–231, aspartate 239, 245–246, alanine 262, and lysine 266 each bind ATP; these read DAK, RF, and RK. Aspartate 239 serves as a coordination point for L-methionine. Lysine 270 lines the L-methionine pocket.

Belongs to the AdoMet synthase family. Homotetramer; dimer of dimers. Mg(2+) serves as cofactor. Requires K(+) as cofactor.

The protein localises to the cytoplasm. The catalysed reaction is L-methionine + ATP + H2O = S-adenosyl-L-methionine + phosphate + diphosphate. The protein operates within amino-acid biosynthesis; S-adenosyl-L-methionine biosynthesis; S-adenosyl-L-methionine from L-methionine: step 1/1. Catalyzes the formation of S-adenosylmethionine (AdoMet) from methionine and ATP. The overall synthetic reaction is composed of two sequential steps, AdoMet formation and the subsequent tripolyphosphate hydrolysis which occurs prior to release of AdoMet from the enzyme. This chain is S-adenosylmethionine synthase, found in Klebsiella pneumoniae subsp. pneumoniae (strain ATCC 700721 / MGH 78578).